A 150-amino-acid chain; its full sequence is Large ribosomal subunit protein bL9 (150 aa).

This sequence belongs to the bacterial ribosomal protein bL9 family.

Binds to the 23S rRNA. The sequence is that of Large ribosomal subunit protein bL9 from Ruthia magnifica subsp. Calyptogena magnifica.